A 361-amino-acid chain; its full sequence is Tetrathionate reductase subunit C (361 aa).

9 helical membrane-spanning segments follow: residues 26 to 46, 53 to 73, 104 to 124, 160 to 180, 193 to 213, 233 to 253, 258 to 278, 288 to 308, and 334 to 354; these read FSYALLISGADLLLLAALALL, AIPMFLILGLSFFSVILLGPL, ALYGGLLWPLTFIVALIFALL, LAAILVPLSALWTIYPGMLFF, LMLPMFFGETFITATGTALIL, GAAAIALAGVLILQMFIWGMW, FAAVVPMMQAAAVIFLLTFIL, ITPIVPVLALFGVVVNKWNLI, and AVSPIALAILLLVILSYIFPM.

The protein belongs to the NrfD family. Probably composed of three subunits: TtrA, TtrB and TtrC.

It is found in the cell membrane. Part of a membrane-bound tetrathionate reductase that catalyzes the reduction of tetrathionate to thiosulfate. TtrC probably anchors TtrA and TtrB to the external face of the cytoplasmic membrane. May transfer electrons from membrane quinol to TtrB. This chain is Tetrathionate reductase subunit C (ttrC), found in Archaeoglobus fulgidus (strain ATCC 49558 / DSM 4304 / JCM 9628 / NBRC 100126 / VC-16).